Here is a 141-residue protein sequence, read N- to C-terminus: Nucleoside diphosphate kinase (141 aa).

K11, F59, R87, T93, R104, and N114 together coordinate ATP. The active-site Pros-phosphohistidine intermediate is the H117.

The protein belongs to the NDK family. In terms of assembly, homotetramer. It depends on Mg(2+) as a cofactor.

The protein resides in the cytoplasm. It catalyses the reaction a 2'-deoxyribonucleoside 5'-diphosphate + ATP = a 2'-deoxyribonucleoside 5'-triphosphate + ADP. The catalysed reaction is a ribonucleoside 5'-diphosphate + ATP = a ribonucleoside 5'-triphosphate + ADP. Major role in the synthesis of nucleoside triphosphates other than ATP. The ATP gamma phosphate is transferred to the NDP beta phosphate via a ping-pong mechanism, using a phosphorylated active-site intermediate. In Neisseria meningitidis serogroup A / serotype 4A (strain DSM 15465 / Z2491), this protein is Nucleoside diphosphate kinase.